Consider the following 190-residue polypeptide: Anthranilate synthase component II (190 aa).

Residues 1–190 form the Glutamine amidotransferase type-1 domain; the sequence is MILIIDNYDS…ENFCTGIAKA (190 aa). Residue 51 to 53 coordinates L-glutamine; that stretch reads GPG. Cysteine 76 functions as the Nucleophile; for GATase activity in the catalytic mechanism. L-glutamine-binding positions include glutamine 80 and 126–127; that span reads SL. Active-site residues include histidine 167 and glutamate 169.

In terms of assembly, tetramer of two components I and two components II.

The enzyme catalyses chorismate + L-glutamine = anthranilate + pyruvate + L-glutamate + H(+). Its pathway is amino-acid biosynthesis; L-tryptophan biosynthesis; L-tryptophan from chorismate: step 1/5. The polypeptide is Anthranilate synthase component II (trpG2) (Haloarcula marismortui (strain ATCC 43049 / DSM 3752 / JCM 8966 / VKM B-1809) (Halobacterium marismortui)).